Here is a 473-residue protein sequence, read N- to C-terminus: Ribulose bisphosphate carboxylase large chain (473 aa).

Residues 1–2 (MS) constitute a propeptide that is removed on maturation. An N-acetylproline modification is found at Pro3. Position 14 is an N6,N6,N6-trimethyllysine (Lys14). Substrate-binding residues include Asn123 and Thr173. Lys175 serves as the catalytic Proton acceptor. Substrate is bound at residue Lys177. Mg(2+) contacts are provided by Lys201, Asp203, and Glu204. At Lys201 the chain carries N6-carboxylysine. His294 serves as the catalytic Proton acceptor. Arg295, His327, and Ser379 together coordinate substrate.

Belongs to the RuBisCO large chain family. Type I subfamily. As to quaternary structure, heterohexadecamer of 8 large chains and 8 small chains; disulfide-linked. The disulfide link is formed within the large subunit homodimers. Mg(2+) serves as cofactor. Post-translationally, the disulfide bond which can form in the large chain dimeric partners within the hexadecamer appears to be associated with oxidative stress and protein turnover.

The protein resides in the plastid. Its subcellular location is the chloroplast. The enzyme catalyses 2 (2R)-3-phosphoglycerate + 2 H(+) = D-ribulose 1,5-bisphosphate + CO2 + H2O. It carries out the reaction D-ribulose 1,5-bisphosphate + O2 = 2-phosphoglycolate + (2R)-3-phosphoglycerate + 2 H(+). Its function is as follows. RuBisCO catalyzes two reactions: the carboxylation of D-ribulose 1,5-bisphosphate, the primary event in carbon dioxide fixation, as well as the oxidative fragmentation of the pentose substrate in the photorespiration process. Both reactions occur simultaneously and in competition at the same active site. The polypeptide is Ribulose bisphosphate carboxylase large chain (Sesbania sesban (Egyptian riverhemp)).